The sequence spans 37 residues: Omega-agatoxin-Aa3d (37 aa).

This sequence belongs to the neurotoxin 04 (omega-agtx) family. 03 (type II/III omega-agtx) subfamily. In terms of processing, disulfide bonds are present. As to expression, expressed by the venom gland.

It localises to the secreted. In terms of biological role, omega-agatoxins are antagonists of voltage-gated calcium channels. This toxin blocks calcium channels in insect central neurons but not at peripheral neuromuscular junctions. In vertebrates, it is broadly active against all high-threshold Cav1/CACNA1 channels and Cav2.2/CACNA1B channels. This Agelenopsis aperta (North American funnel-web spider) protein is Omega-agatoxin-Aa3d.